The following is a 207-amino-acid chain: C-type lectin domain family 2 member D11 (207 aa).

Over 1 to 44 (MSAKKASQPMLNTTGSLQEGEMGKMFHGKCLRIVSPESPAKLYC) the chain is Cytoplasmic. Phosphoserine is present on residues serine 7 and serine 16. A helical; Signal-anchor for type II membrane protein membrane pass occupies residues 45-65 (CYGVIMVLSVAVVALSVALSV). Residues 66–207 (KMTPQISTIN…LQCKTPFSPM (142 aa)) lie on the Extracellular side of the membrane. The region spanning 87–198 (VGNKCFYFSE…SCSKLNSYSL (112 aa)) is the C-type lectin domain. Asparagine 100 is a glycosylation site (N-linked (GlcNAc...) asparagine).

It is found in the cell membrane. Receptor for KLRB1B that protects target cells against natural killer cell-mediated lysis. The sequence is that of C-type lectin domain family 2 member D11 (Clec2d11) from Rattus norvegicus (Rat).